The chain runs to 377 residues: Benzylmalonyl-CoA dehydrogenase (377 aa).

Residues 123–132, 156–158, Arg266, Gln277, and 363–365 each bind FAD; these read ICMTEPNAGS, WIT, and TSE.

This sequence belongs to the acyl-CoA dehydrogenase family. As to quaternary structure, homotetramer. Requires FAD as cofactor.

The enzyme catalyses (2-aminobenzyl)malonyl-CoA + O2 + H(+) = (E)-2-aminocinnamoyl-CoA + H2O2 + CO2. It carries out the reaction benzylmalonyl-CoA + O2 + H(+) = (E)-cinnamoyl-CoA + H2O2 + CO2. Functionally, involved in degradation of indoleacetate, the most common member of the auxin class of plant hormones. Catalyzes the irreversible oxidative decarboxylation of (2-aminobenzyl)malonyl-CoA to 2-aminocinnamoyl-CoA and CO(2). In vitro, shows high catalytic efficiency with benzylmalonyl-CoA, a chemical analog of the physiological substrate, but otherwise accepts only a few medium-chain alkylmalonyl-CoA compounds as alternative substrates with low activities. The polypeptide is Benzylmalonyl-CoA dehydrogenase (Aromatoleum aromaticum (strain DSM 19018 / LMG 30748 / EbN1) (Azoarcus sp. (strain EbN1))).